A 167-amino-acid polypeptide reads, in one-letter code: uncharacterized protein (167 aa).

This is an uncharacterized protein from Acidianus bottle-shaped virus (isolate Italy/Pozzuoli) (ABV).